The primary structure comprises 86 residues: Tryptophan-containing weak neurotoxin (86 aa).

A signal peptide spans 1–21 (MKTLLLTLVVVTIVCLDLGYT). 5 cysteine pairs are disulfide-bonded: Cys24/Cys45, Cys27/Cys32, Cys38/Cys63, Cys67/Cys78, and Cys79/Cys84.

This sequence belongs to the three-finger toxin family. Ancestral subfamily. Orphan group II sub-subfamily. Monomer in solution. Post-translationally, the disulfide bond Cys-27-Cys-32 is probably not needed for efficient interaction of the toxin with the target receptor (Torpedo muscle or alpha-7/CHRNA7 nAChR). As to expression, expressed by the venom gland.

It localises to the secreted. In terms of biological role, neurotoxin that irreversibly inhibits nicotinic acetylcholine receptors (nAChR) and allosterically interacts with muscarinic acetylcholine receptors (mAChR). The loop II is involved in the interaction of this toxin with nAChR and mAChR. On nAChR, it acts as a competitive antagonist (muscle-type and alpha-7/CHRNA7) with IC(50) values in the micromolar range. On mAChR, in presence of ACh, it partially inhibits the effect of acetylcholine (ACh) (allosteric antagonist), whereas in the absence of ACh, it activates the receptor (allosteric agonist). It also shows a very weak inhibition of GABA(A) receptor composed of alpha-1-beta-3-gamma-2 (GABRA1 and GABRB3 and GABRG2) subunits (10 uM inhibit 31% current). In vivo, is nonlethal to mice at concentrations up to 20 mg/kg, but exerts a myorelaxant effect, induces a dose-dependent decrease in blood pressure and an increase in heart rate in mice and rats. The protein is Tryptophan-containing weak neurotoxin of Naja kaouthia (Monocled cobra).